The chain runs to 1142 residues: Protein kinase C-like (1142 aa).

Positions 1-67 (MNDEDKVHDI…LRELQMRRLG (67 aa)) constitute an REM-1 1 domain. Positions 70–139 (VDNMSLGASP…PPDSNVPRAR (70 aa)) are disordered. Positions 149–226 (KFDTPHLGPR…LKRYEELHID (78 aa)) constitute an REM-1 2 domain. The C2 domain maps to 231–349 (GPDDDSINLP…LRRKKIEAEM (119 aa)). Residues 357–403 (ADRVGSRAPPPQFPMGAQSPQFAAPPTSPGSQEQNTMIPPQAPPPSQ) are disordered. The span at 385–394 (PGSQEQNTMI) shows a compositional bias: polar residues. Phorbol-ester/DAG-type zinc fingers lie at residues 457–505 (GHKF…VTKC) and 525–576 (PHRF…PDFC). Disordered stretches follow at residues 592–622 (TQKK…SGSI) and 651–807 (SQTT…TDPG). A compositionally biased stretch (polar residues) spans 613-622 (SKTSISSGSI). Composition is skewed to low complexity over residues 663–677 (TSTS…AAAA), 712–724 (SAQQ…SPQQ), and 741–765 (PQAR…MYQQ). Positions 817–1076 (FNFLAVLGKG…AQEIMSQPFF (260 aa)) constitute a Protein kinase domain. ATP contacts are provided by residues 823–831 (LGKGNFGKV) and Lys-846. Asp-942 (proton acceptor) is an active-site residue. Positions 1077–1142 (RNINWDDIYH…RGFSYTADFE (66 aa)) constitute an AGC-kinase C-terminal domain.

This sequence belongs to the protein kinase superfamily. AGC Ser/Thr protein kinase family. PKC subfamily.

It carries out the reaction L-seryl-[protein] + ATP = O-phospho-L-seryl-[protein] + ADP + H(+). The catalysed reaction is L-threonyl-[protein] + ATP = O-phospho-L-threonyl-[protein] + ADP + H(+). The sequence is that of Protein kinase C-like from Neurospora crassa (strain ATCC 24698 / 74-OR23-1A / CBS 708.71 / DSM 1257 / FGSC 987).